Consider the following 122-residue polypeptide: Large ribosomal subunit protein eL31 (122 aa).

It belongs to the eukaryotic ribosomal protein eL31 family.

The polypeptide is Large ribosomal subunit protein eL31 (Caenorhabditis elegans).